Here is a 38-residue protein sequence, read N- to C-terminus: Antimicrobial peptide 1 (38 aa).

In terms of processing, disulfide bonds. As to expression, expressed in flowers but not in leaves, seeds or roots (at protein level).

Functionally, antimicrobial peptide. Active against fungal species B.cinerea (IC(50)=5.8 uM) and A.niger (IC(50)=5.6 uM) but not against F.oxysporum, F.graminearum, B.sorokinina and P.debaryanum at concentrations below 10 uM. Active against bacterial species P.syringae, B.subtilis and X.campestris. The polypeptide is Antimicrobial peptide 1 (Taraxacum officinale (Common dandelion)).